Here is a 205-residue protein sequence, read N- to C-terminus: Large ribosomal subunit protein uL3c (205 aa).

The tract at residues 130–150 (RGPMSHGSKNHRQPGSIGAGT) is disordered.

This sequence belongs to the universal ribosomal protein uL3 family. As to quaternary structure, part of the 50S ribosomal subunit.

The protein resides in the plastid. Its subcellular location is the chloroplast. One of the primary rRNA binding proteins, it binds directly near the 3'-end of the 23S rRNA, where it nucleates assembly of the 50S subunit. The sequence is that of Large ribosomal subunit protein uL3c (rpl3) from Gracilaria tenuistipitata var. liui (Red alga).